Here is a 186-residue protein sequence, read N- to C-terminus: Ribosome-recycling factor (186 aa).

It belongs to the RRF family.

The protein localises to the cytoplasm. Responsible for the release of ribosomes from messenger RNA at the termination of protein biosynthesis. May increase the efficiency of translation by recycling ribosomes from one round of translation to another. The polypeptide is Ribosome-recycling factor (Rickettsia felis (strain ATCC VR-1525 / URRWXCal2) (Rickettsia azadi)).